We begin with the raw amino-acid sequence, 205 residues long: Large ribosomal subunit protein uL3 (205 aa).

The protein belongs to the universal ribosomal protein uL3 family. As to quaternary structure, part of the 50S ribosomal subunit. Forms a cluster with proteins L14 and L19.

One of the primary rRNA binding proteins, it binds directly near the 3'-end of the 23S rRNA, where it nucleates assembly of the 50S subunit. The chain is Large ribosomal subunit protein uL3 from Porphyromonas gingivalis (strain ATCC 33277 / DSM 20709 / CIP 103683 / JCM 12257 / NCTC 11834 / 2561).